We begin with the raw amino-acid sequence, 627 residues long: Neuronal acetylcholine receptor subunit alpha-4 (627 aa).

The signal sequence occupies residues 1–26 (MELGGPGAPRLLPPLLLLLGTGLLRA). Residues 27–249 (SSHVETRAHA…RRLPLFYTIN (223 aa)) are Extracellular-facing. N-linked (GlcNAc...) asparagine glycosylation occurs at N57. Residues V76 and E78 each coordinate Ca(2+). N-linked (GlcNAc...) asparagine glycosylation is found at N107 and N174. Disulfide bonds link C161/C175 and C225/C226. Residues 250–269 (LIIPCLLISCLTVLVFYLPS) traverse the membrane as a helical segment. C271 is lipidated: S-palmitoyl cysteine. 2 helical membrane-spanning segments follow: residues 275–291 (ITLCISVLLSLTVFLLL) and 306–330 (IGEYLLFTMIFVTLSIVITVFVLNV). At 331-600 (HHRSPRTHTM…WKYVAMVIDR (270 aa)) the chain is on the cytoplasmic side. Disordered stretches follow at residues 382-481 (PRFW…VEGG) and 496-561 (DDAA…LPLS). S424 carries the post-translational modification Phosphoserine. Positions 501 to 511 (EADGQAAGALA) are enriched in low complexity. S538 and S541 each carry phosphoserine. Over residues 538–548 (SSVSPSATVKT) the composition is skewed to polar residues. The chain crosses the membrane as a helical span at residues 601-619 (IFLWMFIIVCLLGTVGLFL).

Belongs to the ligand-gated ion channel (TC 1.A.9) family. Acetylcholine receptor (TC 1.A.9.1) subfamily. Alpha-4/CHRNA4 sub-subfamily. As to quaternary structure, neuronal AChR is composed of two different types of subunits: alpha and beta. CHRNA4 forms heteropentameric neuronal acetylcholine receptors with CHRNB2 and CHRNB4, as well as CHRNA5 and CHRNB3 as accesory subunits. Found in two major stoichiometric forms, LS (low agonist sensitivity): (CHRNA4)3:(CHRNB2)2 and HS (high agonist sensitivity): (CHRNA4)2:(CHRNB2)3, the two stoichiometric forms differ in their unitary conductance, calcium permeability, ACh sensitivity and potentiation by divalent cation. Cells produce predominantly an (CHRNA4)3:(CHRNB2)2 nAChR. The (CHRNA4)2:(CHRNB2)3 expression is selectively up-regulated by nicotine and has lower single channel conductance and calcium permeability. In the striatum, also forms CHRNA4:CHRNA6:CHRNB2 complexes. Also found in the stoichiometric form: (CHRNA4:CHRNB2)2:CHRNB3. Interacts with RIC3; which is required for proper folding and assembly. Interacts with LYPD6.

The protein localises to the synaptic cell membrane. It is found in the cell membrane. It catalyses the reaction Ca(2+)(in) = Ca(2+)(out). It carries out the reaction K(+)(in) = K(+)(out). The enzyme catalyses Na(+)(in) = Na(+)(out). Its activity is regulated as follows. Activated by a myriad of ligands such as acetylcholine, cytisine, nicotine, choline and epibatidine. Channel potentiation by calcium is stoichiometry-selective, CHRNA4:CHRNB2 nACh receptor is achieved by calcium association with topographically distinct sites framed by anionic residues within the CHRNA4 subunit and between the CHRNA4 and CHRNB2 subunits. nAChR activity is inhibited by the antagonist alpha-conotoxins BuIA, PnIA, GID and MII, small disulfide-constrained peptides from cone snails. Component of neuronal acetylcholine receptors (nAChRs) that function as pentameric, ligand-gated cation channels with high calcium permeability among other activities. nAChRs are excitatory neurotrasnmitter receptors formed by a collection of nAChR subunits known to mediate synaptic transmission in the nervous system and the neuromuscular junction. Each nAchR subunit confers differential attributes to channel properties, including activation, deactivation and desensitization kinetics, pH sensitivity, cation permeability, and binding to allosteric modulators. CHRNA4 forms heteropentameric neuronal acetylcholine receptors with CHRNB2 and CHRNB4, as well as CHRNA5 and CHRNB3 as accesory subunits. Is the most abundant nAChR subtype expressed in the central nervous system. Found in two major stoichiometric forms,(CHRNA4)3:(CHRNB2)2 and (CHRNA4)2:(CHRNB2)3, the two stoichiometric forms differ in their unitary conductance, calcium permeability, ACh sensitivity and potentiation by divalent cation. Involved in the modulation of calcium-dependent signaling pathways, influences the release of neurotransmitters, including dopamine, glutamate and GABA. In Homo sapiens (Human), this protein is Neuronal acetylcholine receptor subunit alpha-4.